Reading from the N-terminus, the 66-residue chain is Large ribosomal subunit protein eL24 (66 aa).

4 residues coordinate Zn(2+): Cys-6, Cys-9, Cys-32, and Cys-36. A C4-type zinc finger spans residues 6 to 36 (CSFCGKTIEPGTGIMYVRKDGAILYFCSNKC).

It belongs to the eukaryotic ribosomal protein eL24 family. Part of the 50S ribosomal subunit. Forms a cluster with proteins L3 and L14. The cofactor is Zn(2+).

In terms of biological role, binds to the 23S rRNA. This is Large ribosomal subunit protein eL24 from Thermoplasma volcanium (strain ATCC 51530 / DSM 4299 / JCM 9571 / NBRC 15438 / GSS1).